The sequence spans 358 residues: MVDSLKKPGFEEIRPGVKVPAKETLLTPRFYTTDFDEMARMDISVNEDELLAILEEFRTDYNRHHFVRDAEFEKSWDHIDGDTRRLFVEFLERSCTAEFSGFLLYKELGRRLKDKSPVLAECFNLMSRDEARHAGFLNKAMSDFNLSLDLGFLTKSRNYTFFKPKFIFYATYLSEKIGYWRYITIYRHLEAHPEDRIYPIFRFFENWCQDENRHGDFFDAIMKSQPQMLNDWKAKLWSRFFLLSVFATMYLNDIQRKDFYATIGLDARDYDIYVIKKTNETAGRVFPIILDVDSPEFYERLDICVENSEKLSAIASSNTPKFLQFFQKLPVLASTGWQLLRLYLMKPIDAVSAQGAAR.

Belongs to the AcsF family. Requires Fe cation as cofactor.

It carries out the reaction Mg-protoporphyrin IX 13-monomethyl ester + 3 NADPH + 3 O2 + 2 H(+) = 3,8-divinyl protochlorophyllide a + 3 NADP(+) + 5 H2O. The protein operates within porphyrin-containing compound metabolism; chlorophyll biosynthesis (light-independent). In terms of biological role, catalyzes the formation of the isocyclic ring in chlorophyll biosynthesis. Mediates the cyclase reaction, which results in the formation of divinylprotochlorophyllide (Pchlide) characteristic of all chlorophylls from magnesium-protoporphyrin IX 13-monomethyl ester (MgPMME). The polypeptide is Magnesium-protoporphyrin IX monomethyl ester [oxidative] cyclase 3 (Nostoc sp. (strain PCC 7120 / SAG 25.82 / UTEX 2576)).